The primary structure comprises 130 residues: Small ribosomal subunit protein uS8 (130 aa).

Belongs to the universal ribosomal protein uS8 family. In terms of assembly, part of the 30S ribosomal subunit. Contacts proteins S5 and S12.

Functionally, one of the primary rRNA binding proteins, it binds directly to 16S rRNA central domain where it helps coordinate assembly of the platform of the 30S subunit. The polypeptide is Small ribosomal subunit protein uS8 (Buchnera aphidicola subsp. Acyrthosiphon pisum (strain 5A)).